A 260-amino-acid polypeptide reads, in one-letter code: MLESSKVPALTRAIDILNLIARIGPCSAATIIDTLGIPKSTAYLLLNELRRQRFLSLDHQENFCLWTRLVELSGHALSKMDLRELARPRLTQLMDTTGLLCHLGIIDNGSAYYILKVESSATISVRSHEGKSLSLYRSGIGKCLLAWQPAAVQQSIIEGLVWEQATPTTITHPQQLHEELARIRRQGWSYDNGEDYADVRCVAAPVFNANNELTAAISVVGTRLQINEEYRDYLAGKAIACARDISRLLGWKSPFDLQAS.

The 61-residue stretch at Val7–Thr67 folds into the HTH iclR-type domain. Residues Ala28 to Asn47 constitute a DNA-binding region (H-T-H motif). An IclR-ED domain is found at Leu82 to Trp251.

This is an uncharacterized protein from Escherichia coli (strain K12).